We begin with the raw amino-acid sequence, 573 residues long: Methionine--tRNA ligase (573 aa).

Positions 11-21 (PYINGIKHLGN) match the 'HIGH' region motif. Zn(2+) is bound by residues Cys143, Cys146, Cys156, and Cys159. Residues 346–350 (QFSTS) carry the 'KMSKS' region motif. Residue Thr349 coordinates ATP.

This sequence belongs to the class-I aminoacyl-tRNA synthetase family. MetG type 1 subfamily. In terms of assembly, monomer. The cofactor is Zn(2+).

The protein resides in the cytoplasm. It carries out the reaction tRNA(Met) + L-methionine + ATP = L-methionyl-tRNA(Met) + AMP + diphosphate. Is required not only for elongation of protein synthesis but also for the initiation of all mRNA translation through initiator tRNA(fMet) aminoacylation. In Ruegeria sp. (strain TM1040) (Silicibacter sp.), this protein is Methionine--tRNA ligase.